The primary structure comprises 152 residues: Sec-independent protein translocase protein TatB (152 aa).

A helical membrane pass occupies residues 1 to 21; that stretch reads MLDVGFGELFCFGIIALLVLG.

The protein belongs to the TatB family. As to quaternary structure, the Tat system comprises two distinct complexes: a TatABC complex, containing multiple copies of TatA, TatB and TatC subunits, and a separate TatA complex, containing only TatA subunits. Substrates initially bind to the TatABC complex, which probably triggers association of the separate TatA complex to form the active translocon.

The protein resides in the cell inner membrane. Its function is as follows. Part of the twin-arginine translocation (Tat) system that transports large folded proteins containing a characteristic twin-arginine motif in their signal peptide across membranes. Together with TatC, TatB is part of a receptor directly interacting with Tat signal peptides. TatB may form an oligomeric binding site that transiently accommodates folded Tat precursor proteins before their translocation. This is Sec-independent protein translocase protein TatB from Acinetobacter baylyi (strain ATCC 33305 / BD413 / ADP1).